The sequence spans 356 residues: S-adenosylmethionine:tRNA ribosyltransferase-isomerase (356 aa).

It belongs to the QueA family. As to quaternary structure, monomer.

The protein localises to the cytoplasm. It carries out the reaction 7-aminomethyl-7-carbaguanosine(34) in tRNA + S-adenosyl-L-methionine = epoxyqueuosine(34) in tRNA + adenine + L-methionine + 2 H(+). It participates in tRNA modification; tRNA-queuosine biosynthesis. Transfers and isomerizes the ribose moiety from AdoMet to the 7-aminomethyl group of 7-deazaguanine (preQ1-tRNA) to give epoxyqueuosine (oQ-tRNA). The protein is S-adenosylmethionine:tRNA ribosyltransferase-isomerase of Serratia proteamaculans (strain 568).